A 314-amino-acid polypeptide reads, in one-letter code: Testis-specific Y-encoded protein 9 (314 aa).

The protein belongs to the nucleosome assembly protein (NAP) family.

The protein localises to the cytoplasm. The protein resides in the nucleus. Functionally, may be involved in sperm differentiation and proliferation. This Homo sapiens (Human) protein is Testis-specific Y-encoded protein 9.